Consider the following 435-residue polypeptide: Tol-Pal system protein TolB (435 aa).

Positions 1-20 are cleaved as a signal peptide; sequence MRKIIAGVFIFVFLISNLYA.

The protein belongs to the TolB family. The Tol-Pal system is composed of five core proteins: the inner membrane proteins TolA, TolQ and TolR, the periplasmic protein TolB and the outer membrane protein Pal. They form a network linking the inner and outer membranes and the peptidoglycan layer.

The protein resides in the periplasm. Part of the Tol-Pal system, which plays a role in outer membrane invagination during cell division and is important for maintaining outer membrane integrity. The polypeptide is Tol-Pal system protein TolB (Francisella tularensis subsp. tularensis (strain WY96-3418)).